A 190-amino-acid chain; its full sequence is dCTP deaminase, dUMP-forming (190 aa).

Residues 101–106 (KSSLGR), Asp-119, 127–129 (TLE), Gln-148, Tyr-162, and Gln-174 each bind dCTP. Glu-129 serves as the catalytic Proton donor/acceptor. Positions 162-190 (YGSASAGSKYQGQRGPTPSRSYENFIKNT) are disordered. Positions 166 to 190 (SAGSKYQGQRGPTPSRSYENFIKNT) are enriched in polar residues.

The protein belongs to the dCTP deaminase family. Homotrimer.

It carries out the reaction dCTP + 2 H2O = dUMP + NH4(+) + diphosphate. It functions in the pathway pyrimidine metabolism; dUMP biosynthesis; dUMP from dCTP: step 1/1. Its function is as follows. Bifunctional enzyme that catalyzes both the deamination of dCTP to dUTP and the hydrolysis of dUTP to dUMP without releasing the toxic dUTP intermediate. This is dCTP deaminase, dUMP-forming from Mycobacterium leprae (strain Br4923).